Here is a 69-residue protein sequence, read N- to C-terminus: DNA gyrase inhibitor YacG (69 aa).

Zn(2+) is bound by residues Cys-13, Cys-16, Cys-32, and Cys-36.

Belongs to the DNA gyrase inhibitor YacG family. In terms of assembly, interacts with GyrB. Requires Zn(2+) as cofactor.

Its function is as follows. Inhibits all the catalytic activities of DNA gyrase by preventing its interaction with DNA. Acts by binding directly to the C-terminal domain of GyrB, which probably disrupts DNA binding by the gyrase. The chain is DNA gyrase inhibitor YacG from Neisseria meningitidis serogroup A / serotype 4A (strain DSM 15465 / Z2491).